The chain runs to 317 residues: Transaldolase (317 aa).

Residue lysine 132 is the Schiff-base intermediate with substrate of the active site.

The protein belongs to the transaldolase family. Type 1 subfamily. Homodimer.

It localises to the cytoplasm. It catalyses the reaction D-sedoheptulose 7-phosphate + D-glyceraldehyde 3-phosphate = D-erythrose 4-phosphate + beta-D-fructose 6-phosphate. The protein operates within carbohydrate degradation; pentose phosphate pathway; D-glyceraldehyde 3-phosphate and beta-D-fructose 6-phosphate from D-ribose 5-phosphate and D-xylulose 5-phosphate (non-oxidative stage): step 2/3. Functionally, transaldolase is important for the balance of metabolites in the pentose-phosphate pathway. In Shigella dysenteriae serotype 1 (strain Sd197), this protein is Transaldolase.